Reading from the N-terminus, the 84-residue chain is Small ribosomal subunit protein uS17 (84 aa).

This sequence belongs to the universal ribosomal protein uS17 family. In terms of assembly, part of the 30S ribosomal subunit.

Its function is as follows. One of the primary rRNA binding proteins, it binds specifically to the 5'-end of 16S ribosomal RNA. The sequence is that of Small ribosomal subunit protein uS17 from Vibrio parahaemolyticus serotype O3:K6 (strain RIMD 2210633).